The sequence spans 106 residues: Urease subunit beta (106 aa).

Belongs to the urease beta subunit family. Heterotrimer of UreA (gamma), UreB (beta) and UreC (alpha) subunits. Three heterotrimers associate to form the active enzyme.

The protein localises to the cytoplasm. The enzyme catalyses urea + 2 H2O + H(+) = hydrogencarbonate + 2 NH4(+). The protein operates within nitrogen metabolism; urea degradation; CO(2) and NH(3) from urea (urease route): step 1/1. The chain is Urease subunit beta from Prochlorococcus marinus (strain MIT 9312).